A 202-amino-acid polypeptide reads, in one-letter code: Imidazole glycerol phosphate synthase subunit HisH 2 (202 aa).

Residues 1–202 (MIVVIDYGVG…QLFKNFVELV (202 aa)) enclose the Glutamine amidotransferase type-1 domain. Catalysis depends on Cys-80, which acts as the Nucleophile. Active-site residues include His-183 and Glu-185.

Heterodimer of HisH and HisF.

The protein localises to the cytoplasm. The enzyme catalyses 5-[(5-phospho-1-deoxy-D-ribulos-1-ylimino)methylamino]-1-(5-phospho-beta-D-ribosyl)imidazole-4-carboxamide + L-glutamine = D-erythro-1-(imidazol-4-yl)glycerol 3-phosphate + 5-amino-1-(5-phospho-beta-D-ribosyl)imidazole-4-carboxamide + L-glutamate + H(+). It carries out the reaction L-glutamine + H2O = L-glutamate + NH4(+). The protein operates within amino-acid biosynthesis; L-histidine biosynthesis; L-histidine from 5-phospho-alpha-D-ribose 1-diphosphate: step 5/9. IGPS catalyzes the conversion of PRFAR and glutamine to IGP, AICAR and glutamate. The HisH subunit catalyzes the hydrolysis of glutamine to glutamate and ammonia as part of the synthesis of IGP and AICAR. The resulting ammonia molecule is channeled to the active site of HisF. This is Imidazole glycerol phosphate synthase subunit HisH 2 (hisH2) from Pseudomonas aeruginosa (strain ATCC 15692 / DSM 22644 / CIP 104116 / JCM 14847 / LMG 12228 / 1C / PRS 101 / PAO1).